The primary structure comprises 284 residues: D-tagatose-1,6-bisphosphate aldolase subunit GatY (284 aa).

The active-site Proton donor is the Asp82. Residues His83 and His180 each contribute to the Zn(2+) site. Gly181 serves as a coordination point for dihydroxyacetone phosphate. His208 provides a ligand contact to Zn(2+). Dihydroxyacetone phosphate contacts are provided by residues 209-211 (GAS) and 230-233 (NVAT).

This sequence belongs to the class II fructose-bisphosphate aldolase family. TagBP aldolase GatY subfamily. Forms a complex with GatZ. The cofactor is Zn(2+).

It catalyses the reaction D-tagatofuranose 1,6-bisphosphate = D-glyceraldehyde 3-phosphate + dihydroxyacetone phosphate. It participates in carbohydrate metabolism; D-tagatose 6-phosphate degradation; D-glyceraldehyde 3-phosphate and glycerone phosphate from D-tagatose 6-phosphate: step 2/2. Catalytic subunit of the tagatose-1,6-bisphosphate aldolase GatYZ, which catalyzes the reversible aldol condensation of dihydroxyacetone phosphate (DHAP or glycerone-phosphate) with glyceraldehyde 3-phosphate (G3P) to produce tagatose 1,6-bisphosphate (TBP). Requires GatZ subunit for full activity and stability. Is involved in the catabolism of galactitol. The sequence is that of D-tagatose-1,6-bisphosphate aldolase subunit GatY from Escherichia coli O157:H7.